The chain runs to 366 residues: Succinyl-diaminopimelate desuccinylase (366 aa).

Residue H66 coordinates Zn(2+). D68 is a catalytic residue. Position 97 (D97) interacts with Zn(2+). The Proton acceptor role is filled by E127. Zn(2+) contacts are provided by E128, E156, and H341.

It belongs to the peptidase M20A family. DapE subfamily. Homodimer. Zn(2+) serves as cofactor. Co(2+) is required as a cofactor.

It carries out the reaction N-succinyl-(2S,6S)-2,6-diaminopimelate + H2O = (2S,6S)-2,6-diaminopimelate + succinate. It functions in the pathway amino-acid biosynthesis; L-lysine biosynthesis via DAP pathway; LL-2,6-diaminopimelate from (S)-tetrahydrodipicolinate (succinylase route): step 3/3. In terms of biological role, catalyzes the hydrolysis of N-succinyl-L,L-diaminopimelic acid (SDAP), forming succinate and LL-2,6-diaminopimelate (DAP), an intermediate involved in the bacterial biosynthesis of lysine and meso-diaminopimelic acid, an essential component of bacterial cell walls. The chain is Succinyl-diaminopimelate desuccinylase from Aliarcobacter butzleri (strain RM4018) (Arcobacter butzleri).